The sequence spans 254 residues: 23S rRNA (guanosine-2'-O-)-methyltransferase RlmB (254 aa).

Gly198, Ile218, and Leu227 together coordinate S-adenosyl-L-methionine.

The protein belongs to the class IV-like SAM-binding methyltransferase superfamily. RNA methyltransferase TrmH family. RlmB subfamily. In terms of assembly, homodimer.

It is found in the cytoplasm. It catalyses the reaction guanosine(2251) in 23S rRNA + S-adenosyl-L-methionine = 2'-O-methylguanosine(2251) in 23S rRNA + S-adenosyl-L-homocysteine + H(+). In terms of biological role, specifically methylates the ribose of guanosine 2251 in 23S rRNA. The sequence is that of 23S rRNA (guanosine-2'-O-)-methyltransferase RlmB from Blochmanniella floridana.